The sequence spans 137 residues: Large ribosomal subunit protein uL16c (137 aa).

Residues 1 to 17 (MLSPKKTRFRRQHRGRM) are compositionally biased toward basic residues. The tract at residues 1 to 21 (MLSPKKTRFRRQHRGRMKGLS) is disordered.

Belongs to the universal ribosomal protein uL16 family. In terms of assembly, part of the 50S ribosomal subunit.

It is found in the plastid. The polypeptide is Large ribosomal subunit protein uL16c (Cuscuta obtusiflora (Peruvian dodder)).